The primary structure comprises 250 residues: 5'-nucleotidase SurE (250 aa).

4 residues coordinate a divalent metal cation: aspartate 8, aspartate 9, serine 39, and asparagine 95.

This sequence belongs to the SurE nucleotidase family. Requires a divalent metal cation as cofactor.

The protein localises to the cytoplasm. The catalysed reaction is a ribonucleoside 5'-phosphate + H2O = a ribonucleoside + phosphate. Its function is as follows. Nucleotidase that shows phosphatase activity on nucleoside 5'-monophosphates. The protein is 5'-nucleotidase SurE of Cupriavidus necator (strain ATCC 17699 / DSM 428 / KCTC 22496 / NCIMB 10442 / H16 / Stanier 337) (Ralstonia eutropha).